Reading from the N-terminus, the 98-residue chain is uncharacterized protein (98 aa).

The N-terminal stretch at 1–23 is a signal peptide; sequence MKYVALAFVLSLVILQISAQVGA.

In terms of tissue distribution, nacreous layer of shell (at protein level). Expressed primarily in the mantle with highest level in the mantle pallium and lower level in the mantle edge.

The protein localises to the secreted. This is an uncharacterized protein from Pinctada maxima (Silver-lipped pearl oyster).